The sequence spans 140 residues: Extracellular globin-1 (140 aa).

The Globin domain occupies 1-140 (ECDVLERFKV…YDFIASGIKP (140 aa)). The cysteines at positions 2 and 130 are disulfide-linked. Histidine 93 lines the heme b pocket.

Belongs to the globin family. As to quaternary structure, the giant hemoglobins of worms are formed of a monomeric subunit and a disulfide-bonded trimer. This subunit is monomeric.

The protein resides in the secreted. This is Extracellular globin-1 from Metaphire hilgendorfi (Earthworm).